Reading from the N-terminus, the 547-residue chain is Probable high-affinity hexose transporter ght8, mitochondrial (547 aa).

The N-terminal 21 residues, Met-1–Gly-21, are a transit peptide targeting the mitochondrion. The Mitochondrial intermembrane portion of the chain corresponds to Ala-22–Arg-86. Residues Val-87–Val-107 traverse the membrane as a helical segment. Residues Pro-108–Gln-112 lie on the Cytoplasmic side of the membrane. A helical membrane pass occupies residues Ile-113–Gly-133. At Phe-134–Arg-144 the chain is on the mitochondrial intermembrane side. A helical transmembrane segment spans residues Gly-145–Ile-165. The Cytoplasmic segment spans residues Asn-166–Arg-179. Residues Val-180–Pro-200 form a helical membrane-spanning segment. Topologically, residues Glu-201 to Ala-304 are mitochondrial intermembrane. The chain crosses the membrane as a helical span at residues Leu-305–Phe-325. The Cytoplasmic segment spans residues Gly-326–Arg-328. The chain crosses the membrane as a helical span at residues Met-329–Gly-349. Residues Asn-350–Arg-363 lie on the Mitochondrial intermembrane side of the membrane. Residues Ala-364–Gly-384 form a helical membrane-spanning segment. Residues Pro-385 to Ala-404 lie on the Cytoplasmic side of the membrane. The chain crosses the membrane as a helical span at residues Ala-405–Ile-425. Over Ser-426–Lys-432 the chain is Mitochondrial intermembrane. The chain crosses the membrane as a helical span at residues Tyr-433 to His-453. Residues Glu-454–Ala-547 are Cytoplasmic-facing. Residues Gly-482–Ala-547 are disordered. The span at Thr-517–Ser-529 shows a compositional bias: low complexity. A Phosphoserine modification is found at Ser-519. 2 positions are modified to phosphothreonine: Thr-523 and Thr-526. A phosphoserine mark is found at Ser-527, Ser-528, Ser-529, and Ser-537.

This sequence belongs to the major facilitator superfamily. Sugar transporter (TC 2.A.1.1) family.

It localises to the mitochondrion membrane. In Schizosaccharomyces pombe (strain 972 / ATCC 24843) (Fission yeast), this protein is Probable high-affinity hexose transporter ght8, mitochondrial (ght8).